Reading from the N-terminus, the 1313-residue chain is Inter-alpha-trypsin inhibitor heavy chain H6 (1313 aa).

The N-terminal stretch at 1–23 is a signal peptide; it reads MSGWRYLICVSFLLTILLELTYQ. One can recognise a VIT domain in the interval 24-150; it reads GPPVPASSST…EVTFSLAYEE (127 aa). 4 N-linked (GlcNAc...) asparagine glycosylation sites follow: Asn83, Asn374, Asn540, and Asn594. Positions 283–469 constitute a VWFA domain; it reads NVVFVIDVSS…LQLKGLYEEI (187 aa). Disordered stretches follow at residues 612-644, 783-817, 856-928, and 959-983; these read QPKQASEETRRQTSTSAGPDTIMPSSSSRHGLG, HSKPGAPSHPQLGALTSQAPKGLPQSRPGVSTLQV, LKPS…EPLP, and PSRPGVPTMSLLNSSRPTPEGSPPN. The span at 623 to 640 shows a compositional bias: polar residues; that stretch reads QTSTSAGPDTIMPSSSSR. Residues 864–875 show a composition bias toward polar residues; sequence QISTSISLSKPE. A compositionally biased stretch (pro residues) spans 876 to 888; that stretch reads TPNPHMPQTPLPP. Residues 907 to 921 show a composition bias toward low complexity; that stretch reads TISSSTGPSSTTTTS. Residues Asn971 and Asn1231 are each glycosylated (N-linked (GlcNAc...) asparagine).

This sequence belongs to the ITIH family.

It is found in the secreted. The sequence is that of Inter-alpha-trypsin inhibitor heavy chain H6 (ITIH6) from Homo sapiens (Human).